The primary structure comprises 288 residues: Release factor glutamine methyltransferase (288 aa).

Residues 123 to 127 (GTGSG), Asp146, and Asn190 contribute to the S-adenosyl-L-methionine site. Position 190 to 193 (190 to 193 (NPPY)) interacts with substrate.

Belongs to the protein N5-glutamine methyltransferase family. PrmC subfamily.

The enzyme catalyses L-glutaminyl-[peptide chain release factor] + S-adenosyl-L-methionine = N(5)-methyl-L-glutaminyl-[peptide chain release factor] + S-adenosyl-L-homocysteine + H(+). Methylates the class 1 translation termination release factors RF1/PrfA and RF2/PrfB on the glutamine residue of the universally conserved GGQ motif. In Bacillus subtilis (strain 168), this protein is Release factor glutamine methyltransferase.